The primary structure comprises 155 residues: Small ribosomal subunit protein uS7c (155 aa).

Belongs to the universal ribosomal protein uS7 family. In terms of assembly, part of the 30S ribosomal subunit.

Its subcellular location is the plastid. It localises to the chloroplast. One of the primary rRNA binding proteins, it binds directly to 16S rRNA where it nucleates assembly of the head domain of the 30S subunit. This chain is Small ribosomal subunit protein uS7c (rps7), found in Euonymus alatus (Burning bush).